Here is a 213-residue protein sequence, read N- to C-terminus: Pyrrolidone-carboxylate peptidase (213 aa).

Catalysis depends on residues E78, C141, and H165.

The protein belongs to the peptidase C15 family. In terms of assembly, homotetramer.

The protein localises to the cytoplasm. The enzyme catalyses Release of an N-terminal pyroglutamyl group from a polypeptide, the second amino acid generally not being Pro.. Functionally, removes 5-oxoproline from various penultimate amino acid residues except L-proline. The chain is Pyrrolidone-carboxylate peptidase from Staphylococcus carnosus (strain TM300).